The following is a 155-amino-acid chain: Small ribosomal subunit protein uS7cz/uS7cy (155 aa).

Belongs to the universal ribosomal protein uS7 family. Part of the 30S ribosomal subunit.

The protein resides in the plastid. The protein localises to the chloroplast. Functionally, one of the primary rRNA binding proteins, it binds directly to 16S rRNA where it nucleates assembly of the head domain of the 30S subunit. In Atropa belladonna (Belladonna), this protein is Small ribosomal subunit protein uS7cz/uS7cy (rps7-A).